A 528-amino-acid chain; its full sequence is Probable GTP-binding protein OBGM, mitochondrial (528 aa).

The N-terminal 45 residues, 1–45 (MWRRQHALLRRISLPKPPAATGIGCYYATEPEGRKPKTAPLQSRG), are a transit peptide targeting the mitochondrion. The 294-residue stretch at 46 to 339 (MVDRFRLRAK…TYLILELKSI (294 aa)) folds into the Obg domain. 2 disordered regions span residues 52 to 87 (LRAK…RGGD) and 167 to 212 (HSPF…NHRG). Gly residues predominate over residues 77-86 (PDGGNGGRGG). Positions 197–207 (NTAENDCERGN) are enriched in basic and acidic residues. An OBG-type G domain is found at 340–513 (ADVGLVGMPN…LRVGLRDLMD (174 aa)). GTP is bound by residues 346-353 (GMPNAGKS) and 393-397 (DIPGL).

Belongs to the TRAFAC class OBG-HflX-like GTPase superfamily. OBG GTPase family.

The protein localises to the mitochondrion. In terms of biological role, may bind GTP and have GTPase activity. In Oryza sativa subsp. japonica (Rice), this protein is Probable GTP-binding protein OBGM, mitochondrial (OBGM).